A 274-amino-acid chain; its full sequence is uncharacterized protein (274 aa).

The N-terminal stretch at 1–19 is a signal peptide; the sequence is MKRINKVLLSLLCLVIAYA.

This is an uncharacterized protein from Rickettsia prowazekii (strain Madrid E).